We begin with the raw amino-acid sequence, 99 residues long: Co-chaperonin GroES (99 aa).

It belongs to the GroES chaperonin family. Heptamer of 7 subunits arranged in a ring. Interacts with the chaperonin GroEL.

Its subcellular location is the cytoplasm. Together with the chaperonin GroEL, plays an essential role in assisting protein folding. The GroEL-GroES system forms a nano-cage that allows encapsulation of the non-native substrate proteins and provides a physical environment optimized to promote and accelerate protein folding. GroES binds to the apical surface of the GroEL ring, thereby capping the opening of the GroEL channel. The polypeptide is Co-chaperonin GroES (Corynebacterium jeikeium (strain K411)).